The sequence spans 181 residues: Glutamyl-tRNA(Gln) amidotransferase subunit C, chloroplastic/mitochondrial (181 aa).

Belongs to the GatC family. Subunit of the heterotrimeric GatCAB amidotransferase (AdT) complex, composed of A, B and C subunits.

The protein resides in the mitochondrion. The protein localises to the plastid. Its subcellular location is the chloroplast. It carries out the reaction L-glutamyl-tRNA(Gln) + L-glutamine + ATP + H2O = L-glutaminyl-tRNA(Gln) + L-glutamate + ADP + phosphate + H(+). Its function is as follows. Allows the formation of correctly charged Gln-tRNA(Gln) through the transamidation of misacylated Glu-tRNA(Gln) in chloroplasts and mitochondria. The reaction takes place in the presence of glutamine and ATP through an activated gamma-phospho-Glu-tRNA(Gln). The polypeptide is Glutamyl-tRNA(Gln) amidotransferase subunit C, chloroplastic/mitochondrial (Picea sitchensis (Sitka spruce)).